Reading from the N-terminus, the 140-residue chain is Natriuretic peptides A (140 aa).

Residues 1 to 24 (MDTRGSFSCGFLLLLLIQLQPSRA) form the signal peptide. The propeptide occupies 25–111 (NPIYNLSPAK…KRLRGVQMPR (87 aa)). The tract at residues 55 to 94 (ALESNPDLQEPQTQEEIPPELTDDSDEQKAEPKLASNTPL) is disordered. Positions 71-80 (IPPELTDDSD) are enriched in acidic residues. A disulfide bridge connects residues C118 and C134.

The protein belongs to the natriuretic peptide family. In terms of processing, cleaved by CORIN upon secretion to produce the functional hormone.

It localises to the secreted. Functionally, hormone playing a key role in cardiovascular homeostasis through regulation of natriuresis, diuresis, and vasodilation. Specifically binds and stimulates the cGMP production of the NPR1 receptor. Binds the clearance receptor NPR3. The sequence is that of Natriuretic peptides A (NPPA) from Gallus gallus (Chicken).